A 382-amino-acid chain; its full sequence is Mannan endo-1,4-beta-mannosidase (382 aa).

A signal peptide spans Met1–Ser19. Substrate-binding positions include Trp83, Asn144, Trp147 to Lys151, and Asn180. Glu181 functions as the Proton donor/acceptor in the catalytic mechanism. Substrate-binding residues include Gln187, Gln204, Trp208, Trp243, Tyr282, and His284. An intrachain disulfide couples Cys195 to Cys262. Glu312 (nucleophile) is an active-site residue. Cysteines 317 and 349 form a disulfide. Substrate is bound by residues Trp341 and Asp348. Residues Gly346 to Ser350 are involved in stabilization of the transition state.

This sequence belongs to the glycosyl hydrolase 5 (cellulase A) family. In terms of assembly, monomer.

It is found in the secreted. It carries out the reaction Random hydrolysis of (1-&gt;4)-beta-D-mannosidic linkages in mannans, galactomannans and glucomannans.. Its activity is regulated as follows. Activated particularly by Ca(2+) and Zn(2+), and to a lesser extent by Na(+), K(+), Mg(2+) and Cu(2+). Activation effect of the divalent metal ions Ca(2+), Zn(2+), Mg(2+) and Cu(2+) is reduced significantly by the addition of EDTA. Strongly inhibited by Mn(2+), Hg(2+) and Ag(+). Functionally, hydrolyzes 1,4-beta linked polysaccharide backbones of mannans. Has high activity toward locust bean gum. Also active toward konjac and beta-1,4-mannan. Hydrolyzes mannotetraose (M4) and mannopentaose (M5) to mannobiose (M2) and mannotriose (M3) with a little production of mannose (M1). Hydrolyzes beta-1,4-mannan to M2, M3 and M4. Hardly hydrolyzes M2 and M3. Does not hydrolyze p-nitrophenyl-beta-D-mannopyranoside, gua-gum, carboxymethyl cellulose, soluble starch or laminarin. The chain is Mannan endo-1,4-beta-mannosidase from Cryptopygus antarcticus (Antarctic springtail).